Consider the following 445-residue polypeptide: Gamma-glutamyl phosphate reductase (445 aa).

The protein belongs to the gamma-glutamyl phosphate reductase family.

It is found in the cytoplasm. The enzyme catalyses L-glutamate 5-semialdehyde + phosphate + NADP(+) = L-glutamyl 5-phosphate + NADPH + H(+). Its pathway is amino-acid biosynthesis; L-proline biosynthesis; L-glutamate 5-semialdehyde from L-glutamate: step 2/2. In terms of biological role, catalyzes the NADPH-dependent reduction of L-glutamate 5-phosphate into L-glutamate 5-semialdehyde and phosphate. The product spontaneously undergoes cyclization to form 1-pyrroline-5-carboxylate. The sequence is that of Gamma-glutamyl phosphate reductase from Synechococcus sp. (strain RCC307).